Reading from the N-terminus, the 142-residue chain is ATP synthase epsilon chain (142 aa).

Belongs to the ATPase epsilon chain family. F-type ATPases have 2 components, CF(1) - the catalytic core - and CF(0) - the membrane proton channel. CF(1) has five subunits: alpha(3), beta(3), gamma(1), delta(1), epsilon(1). CF(0) has three main subunits: a, b and c.

It localises to the cell inner membrane. In terms of biological role, produces ATP from ADP in the presence of a proton gradient across the membrane. The sequence is that of ATP synthase epsilon chain from Haemophilus influenzae (strain 86-028NP).